The following is a 106-amino-acid chain: ATP-dependent Clp protease adapter protein ClpS (106 aa).

The interval 1-22 is disordered; sequence MNEYHNSLKSKESVKDERQQKL. Positions 9–20 are enriched in basic and acidic residues; the sequence is KSKESVKDERQQ.

It belongs to the ClpS family. In terms of assembly, binds to the N-terminal domain of the chaperone ClpA.

Involved in the modulation of the specificity of the ClpAP-mediated ATP-dependent protein degradation. The chain is ATP-dependent Clp protease adapter protein ClpS from Photorhabdus laumondii subsp. laumondii (strain DSM 15139 / CIP 105565 / TT01) (Photorhabdus luminescens subsp. laumondii).